We begin with the raw amino-acid sequence, 104 residues long: Large ribosomal subunit protein uL24 (104 aa).

The protein belongs to the universal ribosomal protein uL24 family. In terms of assembly, part of the 50S ribosomal subunit.

In terms of biological role, one of two assembly initiator proteins, it binds directly to the 5'-end of the 23S rRNA, where it nucleates assembly of the 50S subunit. One of the proteins that surrounds the polypeptide exit tunnel on the outside of the subunit. This is Large ribosomal subunit protein uL24 from Shewanella amazonensis (strain ATCC BAA-1098 / SB2B).